The chain runs to 411 residues: Acetate kinase (411 aa).

N7 is a binding site for Mg(2+). K14 provides a ligand contact to ATP. Substrate is bound at residue R94. The active-site Proton donor/acceptor is D151. Residues 211–215 (HLGNG), 285–287 (DMR), and 333–337 (GIGEN) contribute to the ATP site. E387 contacts Mg(2+).

Belongs to the acetokinase family. As to quaternary structure, homodimer. Requires Mg(2+) as cofactor. Mn(2+) serves as cofactor.

It localises to the cytoplasm. The enzyme catalyses acetate + ATP = acetyl phosphate + ADP. It functions in the pathway metabolic intermediate biosynthesis; acetyl-CoA biosynthesis; acetyl-CoA from acetate: step 1/2. Catalyzes the formation of acetyl phosphate from acetate and ATP. Can also catalyze the reverse reaction. The chain is Acetate kinase from Syntrophobacter fumaroxidans (strain DSM 10017 / MPOB).